Consider the following 769-residue polypeptide: Serine/threonine-protein kinase PLK4 (769 aa).

Positions 14–267 (YEVQHLLGKG…LEAVLCHPFM (254 aa)) constitute a Protein kinase domain. ATP contacts are provided by residues 20 to 28 (LGKGGFATV) and Lys43. The Proton acceptor role is filled by Asp138. The 118-residue stretch at 381-498 (EDRISVPPLN…ARFVGLVKSK (118 aa)) folds into the Cryptic POLO box 1 (CPB1) domain. In terms of domain architecture, Cryptic POLO box 2 (CPB2) spans 499–602 (TPKVTYFSTL…GRRPITDVQP (104 aa)). A POLO box domain is found at 660–739 (PIKRINVPDI…IPNIQLKLKT (80 aa)).

This sequence belongs to the protein kinase superfamily. Ser/Thr protein kinase family. CDC5/Polo subfamily. In terms of assembly, homodimer. Ubiquitinated by the SCF(Slimb) ubiquitin ligase complex; leading to its degradation by the proteasome during interphase and regulating centriole number and ensuring the block to centriole reduplication.

The protein resides in the cytoplasm. It localises to the cytoskeleton. It is found in the microtubule organizing center. Its subcellular location is the centrosome. The protein localises to the centriole. It catalyses the reaction L-seryl-[protein] + ATP = O-phospho-L-seryl-[protein] + ADP + H(+). The catalysed reaction is L-threonyl-[protein] + ATP = O-phospho-L-threonyl-[protein] + ADP + H(+). Serine/threonine-protein kinase that plays a central role in centriole duplication. Able to trigger procentriole formation on the surface of the mother centriole cylinder, using mother centriole as a platform, leading to the recruitment of centriole biogenesis proteins such as sas-6. When overexpressed, it is able to induce centrosome amplification through the simultaneous generation of multiple procentrioles adjoining each parental centriole during S phase. Centrosome amplification following overexpression can initiate tumorigenesis, highlighting the importance of centrosome regulation in cancers. The sequence is that of Serine/threonine-protein kinase PLK4 (SAK) from Drosophila simulans (Fruit fly).